Reading from the N-terminus, the 183-residue chain is Translation initiation factor IF-3 (183 aa).

The protein belongs to the IF-3 family. In terms of assembly, monomer.

Its subcellular location is the cytoplasm. IF-3 binds to the 30S ribosomal subunit and shifts the equilibrium between 70S ribosomes and their 50S and 30S subunits in favor of the free subunits, thus enhancing the availability of 30S subunits on which protein synthesis initiation begins. This is Translation initiation factor IF-3 from Vibrio cholerae serotype O1 (strain ATCC 39315 / El Tor Inaba N16961).